Consider the following 215-residue polypeptide: Small ribosomal subunit protein eS1 (215 aa).

Residues 195–215 (SGMQEPQKNEPAPGGEAIAQN) form a disordered region.

Belongs to the eukaryotic ribosomal protein eS1 family.

This Thermoplasma acidophilum (strain ATCC 25905 / DSM 1728 / JCM 9062 / NBRC 15155 / AMRC-C165) protein is Small ribosomal subunit protein eS1.